Here is a 166-residue protein sequence, read N- to C-terminus: uncharacterized protein (166 aa).

It to B.subtilis YpjQ.

This is an uncharacterized protein from Bacillus subtilis (strain 168).